Here is a 416-residue protein sequence, read N- to C-terminus: Gamma-glutamyl phosphate reductase (416 aa).

It belongs to the gamma-glutamyl phosphate reductase family.

It localises to the cytoplasm. It carries out the reaction L-glutamate 5-semialdehyde + phosphate + NADP(+) = L-glutamyl 5-phosphate + NADPH + H(+). Its pathway is amino-acid biosynthesis; L-proline biosynthesis; L-glutamate 5-semialdehyde from L-glutamate: step 2/2. In terms of biological role, catalyzes the NADPH-dependent reduction of L-glutamate 5-phosphate into L-glutamate 5-semialdehyde and phosphate. The product spontaneously undergoes cyclization to form 1-pyrroline-5-carboxylate. The protein is Gamma-glutamyl phosphate reductase of Streptococcus equi subsp. zooepidemicus (strain MGCS10565).